We begin with the raw amino-acid sequence, 534 residues long: Putative ammonium transporter 1 (534 aa).

11 helical membrane-spanning segments follow: residues 31-51 (SFFLCSMALIIFFMQCGFAYL), 69-89 (LLDSCICIIGYWAIGWALAYG), 115-135 (FFFQYVFSATAATIVSGAVAE), 139-159 (FITYVTYCTVISTFIYPVLTH), 184-204 (FAGSGLVHLCGGSISFLAAWI), 223-243 (ILGHSVPFTALGGFILMFGFL), 263-283 (ALAMINTILSGAFAALIYLGV), 291-311 (WTLLLTINACLSGMVAACAGC), 318-338 (ACIWVGLGAGLIYLAFSKLMI), 346-366 (LDAFAVHAGGGFWGLMSSSII), and 401-421 (ICALAIIAWSLGVMLPIFWIL).

It belongs to the ammonia transporter channel (TC 1.A.11.2) family.

The protein resides in the membrane. Involved in the uptake of ammonia. This is Putative ammonium transporter 1 (amt-1) from Caenorhabditis elegans.